The sequence spans 1770 residues: Serine/threonine-protein kinase RIM15 (1770 aa).

Residues 334-358 (HSLSTFPQDNGNNNNNNNNNNNNNN) form a disordered region. The segment covering 343–358 (NGNNNNNNNNNNNNNN) has biased composition (low complexity). A phosphoserine mark is found at serine 380 and serine 476. 2 disordered regions span residues 530–563 (TPTA…LDSN) and 583–694 (STIS…NSVL). A compositionally biased stretch (polar residues) spans 583-601 (STISIDRDNNTNSRGSSMK). Positions 611–632 (SRTSNSERPSSSSSRLGIRSRS) are enriched in low complexity. Positions 637 to 660 (QKIEYSHVDNDDRTNEMLSRDKDS) are enriched in basic and acidic residues. The span at 669–692 (TTITSSTQATTTGTKTNSNNSTNS) shows a compositional bias: low complexity. Phosphothreonine is present on threonine 704. 4 positions are modified to phosphoserine: serine 709, serine 733, serine 736, and serine 737. Phosphothreonine is present on threonine 747. Residues 794–1254 (YDILKPISKG…IQEIKDHPYF (461 aa)) form the Protein kinase domain. ATP-binding positions include 800-808 (ISKGAYGSV) and lysine 823. Catalysis depends on aspartate 918, which acts as the Proton acceptor. The segment covering 970-980 (NNFTMNNNNSN) has biased composition (low complexity). The interval 970–1032 (NNFTMNNNNS…MTPTPSTNTV (63 aa)) is disordered. Polar residues predominate over residues 981–990 (HSQLSTPDSF). Residues 1014–1031 (YSSTSNSHSMTPTPSTNT) show a composition bias toward low complexity. Serine 1044, serine 1048, and serine 1064 each carry phosphoserine. The residue at position 1075 (threonine 1075) is a Phosphothreonine; by PHO85. An AGC-kinase C-terminal domain is found at 1255–1320 (KNVDWDHVYD…NTDVSELSAA (66 aa)). Positions 1378 to 1391 (TGYITPNGTGTTTT) are enriched in low complexity. The tract at residues 1378–1403 (TGYITPNGTGTTTTSAKNSPNLKNLS) is disordered. The segment covering 1392–1401 (SAKNSPNLKN) has biased composition (polar residues). Residue serine 1421 is modified to Phosphoserine. 2 disordered regions span residues 1448 to 1507 (KSEH…STFG) and 1519 to 1572 (FSTR…PANT). The span at 1463–1481 (SSASLMGSSSDGSVSTPGS) shows a compositional bias: low complexity. A phosphoserine mark is found at serine 1531, serine 1538, serine 1542, and serine 1565. The region spanning 1636–1750 (DVLVCEPIPI…ELKKLVAKYA (115 aa)) is the Response regulatory domain. Serine 1764 is subject to Phosphoserine.

It belongs to the protein kinase superfamily. Ser/Thr protein kinase family. Interacts with the cyclin-dependent kinase (CDK) PHO85 and IGO1. In terms of processing, autophosphorylated. Phosphorylation by PKA strongly inhibits kinase activity. Phosphorylation by cyclin-CDK PHO80-PHO85 under favorable growth condition causes inactivation of RIM15 by promoting its export to the cytoplasm.

It is found in the cytoplasm. The protein localises to the nucleus. It catalyses the reaction L-seryl-[protein] + ATP = O-phospho-L-seryl-[protein] + ADP + H(+). The enzyme catalyses L-threonyl-[protein] + ATP = O-phospho-L-threonyl-[protein] + ADP + H(+). Its activity is regulated as follows. Kinase activity is inhibited by phosphorylation by cAMP-dependent protein kinase (PKA). Its function is as follows. Protein kinase that positively regulates proper entry into stationary phase of cells under nutrient starvation conditions. Involved in glycogen and trehalose accumulation, derepression of stress-induced genes, induction of thermotolerance and starvation resistance, and proper G1 cell cycle arrest. Also involved in the activation of a meiotic genes activation pathway. Phosphorylates IGO1 and IGO2, both involved in the TORC1 control of gene expression and chronological life span. In Saccharomyces cerevisiae (strain ATCC 204508 / S288c) (Baker's yeast), this protein is Serine/threonine-protein kinase RIM15 (RIM15).